A 661-amino-acid chain; its full sequence is Phospholipid:diacylglycerol acyltransferase (661 aa).

A disordered region spans residues 1 to 71 (MGTLFRRNVQ…FDRKRDGNGR (71 aa)). At 1–80 (MGTLFRRNVQ…RKRWRDSRRL (80 aa)) the chain is on the cytoplasmic side. Residues 34 to 48 (HIHHQQGLGHKRRRG) show a composition bias toward basic residues. 2 short sequence motifs (bipartite nuclear localization signal) span residues 43–50 (HKRRRGIS) and 64–71 (RKRDGNGR). Residues 54 to 70 (KRNERGKDFDRKRDGNG) are compositionally biased toward basic and acidic residues. A helical transmembrane segment spans residues 81–101 (IFILGAFLGVLLPFSFGAYHV). Over 102-661 (HNSDSDLFDN…QWVSQMPFPM (560 aa)) the chain is Lumenal. Residue glutamine 162 participates in substrate binding. Residues 322–326 (GHSMG) carry the GHSXG lipase motif motif. The Acyl-ester intermediate role is filled by serine 324. Methionine 325 lines the substrate pocket. 3 N-linked (GlcNAc...) asparagine glycosylation sites follow: asparagine 453, asparagine 461, and asparagine 469. Residue aspartate 567 is the Charge relay system of the active site. The N-linked (GlcNAc...) asparagine glycan is linked to asparagine 594. The active-site Charge relay system is histidine 618.

It belongs to the AB hydrolase superfamily. Lipase family.

The protein resides in the endoplasmic reticulum membrane. Its subcellular location is the nucleus inner membrane. The enzyme catalyses a glycerophospholipid + a 1,2-diacyl-sn-glycerol = a monoacylglycerophospholipid + a triacyl-sn-glycerol. It catalyses the reaction a 1-acyl-sn-glycerol + a 1,2-diacyl-sn-glycero-3-phosphocholine = a 1-acyl-sn-glycero-3-phosphocholine + a 1,2-diacyl-sn-glycerol. It carries out the reaction 1,2-di-(9Z-octadecenoyl)-sn-glycero-3-phosphoethanolamine + 1,2-di-(9Z-octadecenoyl)-sn-glycerol = 1-(9Z-octadecenoyl)-sn-glycero-3-phosphoethanolamine + 1,2,3-tri-(9Z-octadecenoyl)-glycerol. The catalysed reaction is 1,2-di-(9Z-octadecenoyl)-sn-glycerol + 1,2-di-(9Z-octadecenoyl)-sn-glycero-3-phosphocholine = 1,2,3-tri-(9Z-octadecenoyl)-glycerol + 1-(9Z-octadecenoyl)-sn-glycero-3-phosphocholine. The enzyme catalyses 1-(9Z-octadecenoyl)-sn-glycerol + 1,2-di-(9Z-octadecenoyl)-sn-glycero-3-phosphocholine = di-(9Z)-octadecenoylglycerol + 1-(9Z-octadecenoyl)-sn-glycero-3-phosphocholine. It catalyses the reaction 2-(9Z-octadecenoyl)-glycerol + 1,2-di-(9Z-octadecenoyl)-sn-glycero-3-phosphocholine = 1,2-di-(9Z-octadecenoyl)-glycerol + 1-(9Z-octadecenoyl)-sn-glycero-3-phosphocholine. It carries out the reaction 1-(9Z-octadecenoyl)-2-hexadecanoyl-sn-glycero-3-phosphoethanolamine + 1,2-di-(9Z-octadecenoyl)-sn-glycerol = 1,2-di-(9Z)-octadecenoyl-3-hexadecanoyl-sn-glycerol + 1-(9Z-octadecenoyl)-sn-glycero-3-phosphoethanolamine. The catalysed reaction is 1-(9Z-octadecenoyl)-2-octadecanoyl-sn-glycero-3-phosphoethanolamine + 1,2-di-(9Z-octadecenoyl)-sn-glycerol = 1,2-di-(9Z)-octadecenoyl-3-octadecanoyl-sn-glycerol + 1-(9Z-octadecenoyl)-sn-glycero-3-phosphoethanolamine. The enzyme catalyses 1-(9Z)-octadecenoyl-2-(9Z,12Z)-octadecadienoyl-sn-glycero-3-phosphoethanolamine + 1,2-di-(9Z-octadecenoyl)-sn-glycerol = 1,2-di-(9Z)-octadecenoyl-3-(9Z,12Z)-octadecadienoyl-sn-glycerol + 1-(9Z-octadecenoyl)-sn-glycero-3-phosphoethanolamine. In terms of biological role, catalyzes triacylglycerol (TAG) formation by an acyl-CoA independent pathway. The enzyme specifically transfers acyl groups from the sn-2 position of a phospholipid to diacylglycerol (DAG), thus forming an sn-1-lysophospholipid. The preferred acyl donors are phosphatidylethanolamine (PE) and phosphatidylcholine (PC). Also capable of using broad acyl donors such as phosphatidic acid (PA), phosphatidylserine (PS), phosphatidylglycerol (PG) and phosphatidylinositol (PI), as well as monogalactosyldiacylglycerol (MGDG), digalactosyldiacylglycerol (DGDG), and acyl-CoA, and it is more likely to use unsaturated acyl donors. As acyl acceptors, it prefers 1,2- over 1,3-diacylglycerol (DAG). Additionally, has esterification activity that can utilize methanol as acyl acceptor to generate fatty acid methyl esters (FAME). Can also utilize ceramide instead of DAG, acylating the ceramides by attaching a fatty acid to the hydroxy group on the first carbon atom of the long-chain base to produce 1-O-acylceramides. Involved in lipid particle synthesis from the endoplasmic reticulum, promoting localized TAG production at discrete ER subdomains. Relocates from the endoplasmic reticulum to a subdomain of the inner nuclear membrane upon nutrient starvation, where it provides a site of TAG synthesis, which is coupled with nuclear membrane remodeling. This Saccharomyces cerevisiae (strain ATCC 204508 / S288c) (Baker's yeast) protein is Phospholipid:diacylglycerol acyltransferase.